A 1383-amino-acid chain; its full sequence is DNA-directed RNA polymerase subunit beta'' (1383 aa).

The Zn(2+) site is built by cysteine 220, cysteine 289, cysteine 296, and cysteine 299.

The protein belongs to the RNA polymerase beta' chain family. RpoC2 subfamily. In plastids the minimal PEP RNA polymerase catalytic core is composed of four subunits: alpha, beta, beta', and beta''. When a (nuclear-encoded) sigma factor is associated with the core the holoenzyme is formed, which can initiate transcription. The cofactor is Zn(2+).

The protein resides in the plastid. It is found in the chloroplast. It carries out the reaction RNA(n) + a ribonucleoside 5'-triphosphate = RNA(n+1) + diphosphate. Functionally, DNA-dependent RNA polymerase catalyzes the transcription of DNA into RNA using the four ribonucleoside triphosphates as substrates. The sequence is that of DNA-directed RNA polymerase subunit beta'' from Oenothera parviflora (Small-flowered evening primrose).